The sequence spans 150 residues: Small ribosomal subunit protein uS11 (150 aa).

Residues 130 to 150 are disordered; sequence DVTPIPSDSTRRKSGRRGRRL. A compositionally biased stretch (basic residues) spans 141-150; the sequence is RKSGRRGRRL.

The protein belongs to the universal ribosomal protein uS11 family.

This is Small ribosomal subunit protein uS11 (RPS14) from Lupinus luteus (European yellow lupine).